We begin with the raw amino-acid sequence, 104 residues long: Large ribosomal subunit protein uL24 (104 aa).

This sequence belongs to the universal ribosomal protein uL24 family. In terms of assembly, part of the 50S ribosomal subunit.

In terms of biological role, one of two assembly initiator proteins, it binds directly to the 5'-end of the 23S rRNA, where it nucleates assembly of the 50S subunit. Its function is as follows. One of the proteins that surrounds the polypeptide exit tunnel on the outside of the subunit. The protein is Large ribosomal subunit protein uL24 of Clostridium perfringens (strain SM101 / Type A).